The sequence spans 470 residues: Calcitonin gene-related peptide type 1 receptor (470 aa).

The signal sequence occupies residues 1 to 23; sequence MTASCWTICLFLLGSVTEFIVLA. Residues 24 to 147 are Extracellular-facing; that stretch reads SPEVNESQQQ…HTTEGRRTAM (124 aa). N-linked (GlcNAc...) asparagine glycans are attached at residues Asn-28, Asn-74, Asn-126, and Asn-131. 3 disulfides stabilise this stretch: Cys-56-Cys-82, Cys-73-Cys-113, and Cys-96-Cys-135. A helical membrane pass occupies residues 148–172; sequence NLFYLALIGHGLSLTSLFISLGIFF. Residues 173 to 183 lie on the Cytoplasmic side of the membrane; the sequence is HFKSLSCQRIT. Residues 184–206 traverse the membrane as a helical segment; sequence LHKNLFFSFVLNSIITIIWLTAV. Residues 207 to 217 lie on the Extracellular side of the membrane; the sequence is ANNQELVQQNP. Residues 218 to 246 traverse the membrane as a helical segment; it reads ISCKISQFIHLYIFGCNYFWMLCEGIYLH. Residues 247–260 lie on the Cytoplasmic side of the membrane; the sequence is TLIVVAVFAEKQHL. Residues 261–281 traverse the membrane as a helical segment; sequence MWYYLLGWGFPLIPATIHAVA. Over 282 to 297 the chain is Extracellular; that stretch reads RSYYYNDNCWISSNTS. Asn-295 is a glycosylation site (N-linked (GlcNAc...) asparagine). The chain crosses the membrane as a helical span at residues 298–322; that stretch reads LLYIIHGPICAAMLVNLFFLLNIVR. Residues 323-337 lie on the Cytoplasmic side of the membrane; the sequence is VLITKLKVTHQAKSS. Residues 338–359 form a helical membrane-spanning segment; that stretch reads LYMKAVRATLILVPLLGIQYVL. Residues 360 to 374 are Extracellular-facing; the sequence is LPYKPSGRVSAEIYD. The helical transmembrane segment at 375-395 threads the bilayer; it reads YIMHILMHYQGLLVATIFCFF. Residues 396–470 are Cytoplasmic-facing; the sequence is NGEVQAVLRR…AIIKPENPFA (75 aa).

The protein belongs to the G-protein coupled receptor 2 family.

It is found in the cell membrane. Its function is as follows. May function as G protein-coupled receptor for calcitonin-gene-related peptides and adrenomedullin. Specificity may be modulated by accessory proteins. May activate cAMP-dependent pathway. The chain is Calcitonin gene-related peptide type 1 receptor (calcrla) from Danio rerio (Zebrafish).